A 360-amino-acid polypeptide reads, in one-letter code: D-alanine--D-alanine ligase (360 aa).

In terms of domain architecture, ATP-grasp spans 134 to 343 (KILAQRVGVP…YTELITRLIE (210 aa)). ATP is bound at residue 169 to 224 (AEKLGRDMFVKPSNQGSSVGVSHVTNADEYAAALKEAFKYDDKVLVEETVPGTEVE). Residues D297, E310, and N312 each coordinate Mg(2+).

The protein belongs to the D-alanine--D-alanine ligase family. Mg(2+) is required as a cofactor. It depends on Mn(2+) as a cofactor.

It is found in the cytoplasm. The enzyme catalyses 2 D-alanine + ATP = D-alanyl-D-alanine + ADP + phosphate + H(+). It participates in cell wall biogenesis; peptidoglycan biosynthesis. In terms of biological role, cell wall formation. The polypeptide is D-alanine--D-alanine ligase (Lactobacillus helveticus (strain DPC 4571)).